We begin with the raw amino-acid sequence, 203 residues long: ATP-dependent Clp protease proteolytic subunit (203 aa).

Residue Ser-107 is the Nucleophile of the active site. Residue His-132 is part of the active site.

It belongs to the peptidase S14 family. In terms of assembly, fourteen ClpP subunits assemble into 2 heptameric rings which stack back to back to give a disk-like structure with a central cavity, resembling the structure of eukaryotic proteasomes.

The protein localises to the cytoplasm. It carries out the reaction Hydrolysis of proteins to small peptides in the presence of ATP and magnesium. alpha-casein is the usual test substrate. In the absence of ATP, only oligopeptides shorter than five residues are hydrolyzed (such as succinyl-Leu-Tyr-|-NHMec, and Leu-Tyr-Leu-|-Tyr-Trp, in which cleavage of the -Tyr-|-Leu- and -Tyr-|-Trp bonds also occurs).. Its function is as follows. Cleaves peptides in various proteins in a process that requires ATP hydrolysis. Has a chymotrypsin-like activity. Plays a major role in the degradation of misfolded proteins. This chain is ATP-dependent Clp protease proteolytic subunit, found in Shewanella pealeana (strain ATCC 700345 / ANG-SQ1).